The chain runs to 348 residues: D-alanine--D-alanine ligase (348 aa).

One can recognise an ATP-grasp domain in the interval 132–334; it reads KRVLESAGIA…YPDLIEKLVA (203 aa). 162 to 217 is an ATP binding site; it reads EEKLSYPVFTKPSNMGSSVGISKSDNQEELRASLDLAFKYDSRVLVEQGVTAREIE. Residues D288, E301, and N303 each contribute to the Mg(2+) site.

The protein belongs to the D-alanine--D-alanine ligase family. Requires Mg(2+) as cofactor. Mn(2+) is required as a cofactor.

The protein resides in the cytoplasm. It catalyses the reaction 2 D-alanine + ATP = D-alanyl-D-alanine + ADP + phosphate + H(+). It participates in cell wall biogenesis; peptidoglycan biosynthesis. Its function is as follows. Cell wall formation. The polypeptide is D-alanine--D-alanine ligase (Streptococcus gordonii (strain Challis / ATCC 35105 / BCRC 15272 / CH1 / DL1 / V288)).